We begin with the raw amino-acid sequence, 198 residues long: FMN-dependent NADH:quinone oxidoreductase 6 (198 aa).

96–99 (MYNF) contributes to the FMN binding site.

The protein belongs to the azoreductase type 1 family. As to quaternary structure, homodimer. Requires FMN as cofactor.

It carries out the reaction 2 a quinone + NADH + H(+) = 2 a 1,4-benzosemiquinone + NAD(+). It catalyses the reaction N,N-dimethyl-1,4-phenylenediamine + anthranilate + 2 NAD(+) = 2-(4-dimethylaminophenyl)diazenylbenzoate + 2 NADH + 2 H(+). Its function is as follows. Quinone reductase that provides resistance to thiol-specific stress caused by electrophilic quinones. Also exhibits azoreductase activity. Catalyzes the reductive cleavage of the azo bond in aromatic azo compounds to the corresponding amines. This is FMN-dependent NADH:quinone oxidoreductase 6 from Burkholderia lata (strain ATCC 17760 / DSM 23089 / LMG 22485 / NCIMB 9086 / R18194 / 383).